Consider the following 434-residue polypeptide: Gamma-glutamyl phosphate reductase (434 aa).

Belongs to the gamma-glutamyl phosphate reductase family.

The protein localises to the cytoplasm. It carries out the reaction L-glutamate 5-semialdehyde + phosphate + NADP(+) = L-glutamyl 5-phosphate + NADPH + H(+). It participates in amino-acid biosynthesis; L-proline biosynthesis; L-glutamate 5-semialdehyde from L-glutamate: step 2/2. Catalyzes the NADPH-dependent reduction of L-glutamate 5-phosphate into L-glutamate 5-semialdehyde and phosphate. The product spontaneously undergoes cyclization to form 1-pyrroline-5-carboxylate. The polypeptide is Gamma-glutamyl phosphate reductase (Pelotomaculum thermopropionicum (strain DSM 13744 / JCM 10971 / SI)).